Consider the following 34-residue polypeptide: Photosystem II reaction center protein M (34 aa).

The chain crosses the membrane as a helical span at residues 5–25; that stretch reads ILAFIATALFILVPTAFLLII.

Belongs to the PsbM family. In terms of assembly, PSII is composed of 1 copy each of membrane proteins PsbA, PsbB, PsbC, PsbD, PsbE, PsbF, PsbH, PsbI, PsbJ, PsbK, PsbL, PsbM, PsbT, PsbX, PsbY, PsbZ, Psb30/Ycf12, at least 3 peripheral proteins of the oxygen-evolving complex and a large number of cofactors. It forms dimeric complexes.

The protein localises to the plastid. It localises to the chloroplast thylakoid membrane. In terms of biological role, one of the components of the core complex of photosystem II (PSII). PSII is a light-driven water:plastoquinone oxidoreductase that uses light energy to abstract electrons from H(2)O, generating O(2) and a proton gradient subsequently used for ATP formation. It consists of a core antenna complex that captures photons, and an electron transfer chain that converts photonic excitation into a charge separation. This subunit is found at the monomer-monomer interface. The protein is Photosystem II reaction center protein M of Phaseolus vulgaris (Kidney bean).